Here is a 289-residue protein sequence, read N- to C-terminus: ATP synthase gamma chain (289 aa).

This sequence belongs to the ATPase gamma chain family. In terms of assembly, F-type ATPases have 2 components, CF(1) - the catalytic core - and CF(0) - the membrane proton channel. CF(1) has five subunits: alpha(3), beta(3), gamma(1), delta(1), epsilon(1). CF(0) has three main subunits: a, b and c.

The protein localises to the cell inner membrane. Its function is as follows. Produces ATP from ADP in the presence of a proton gradient across the membrane. The gamma chain is believed to be important in regulating ATPase activity and the flow of protons through the CF(0) complex. In Pasteurella multocida (strain Pm70), this protein is ATP synthase gamma chain.